A 155-amino-acid polypeptide reads, in one-letter code: Interleukin-2 (155 aa).

The N-terminal stretch at 1–20 (MYSRQLASCVALALVLLANS) is a signal peptide. Threonine 23 carries O-linked (GalNAc...) threonine glycosylation. Residues cysteine 78 and cysteine 126 are joined by a disulfide bond.

The protein belongs to the IL-2 family.

It is found in the secreted. Functionally, cytokine produced by activated CD4-positive helper T-cells and to a lesser extend activated CD8-positive T-cells and natural killer (NK) cells that plays pivotal roles in the immune response and tolerance. Binds to a receptor complex composed of either the high-affinity trimeric IL-2R (IL2RA/CD25, IL2RB/CD122 and IL2RG/CD132) or the low-affinity dimeric IL-2R (IL2RB and IL2RG). Interaction with the receptor leads to oligomerization and conformation changes in the IL-2R subunits resulting in downstream signaling starting with phosphorylation of JAK1 and JAK3. In turn, JAK1 and JAK3 phosphorylate the receptor to form a docking site leading to the phosphorylation of several substrates including STAT5. This process leads to activation of several pathways including STAT, phosphoinositide-3-kinase/PI3K and mitogen-activated protein kinase/MAPK pathways. Functions as a T-cell growth factor and can increase NK-cell cytolytic activity as well. Promotes strong proliferation of activated B-cells and subsequently immunoglobulin production. Plays a pivotal role in regulating the adaptive immune system by controlling the survival and proliferation of regulatory T-cells, which are required for the maintenance of immune tolerance. Moreover, participates in the differentiation and homeostasis of effector T-cell subsets, including Th1, Th2, Th17 as well as memory CD8-positive T-cells. This is Interleukin-2 (IL2) from Meriones unguiculatus (Mongolian jird).